The primary structure comprises 226 residues: Membrane protein (226 aa).

Topologically, residues 1–11 (MSNGSIPVDEV) are virion surface. Residues 12 to 32 (IEHLRNWNFTWNIILTILLVV) traverse the membrane as a helical segment. Residues 33–41 (LQYGHYKYS) lie on the Intravirion side of the membrane. The helical transmembrane segment at 42-62 (VFLYGVKMAILWILWPLVLAL) threads the bilayer. The Virion surface portion of the chain corresponds to 63-75 (SLFDAWASFQVNW). Residues 76-96 (VFFAFSILMACITLMLWIMYF) traverse the membrane as a helical segment. Over 97–226 (VNSIRLWRRT…TDSEKVLHLV (130 aa)) the chain is Intravirion. The segment at 200–216 (RSKHGDYSAVSNPSAVL) is interaction with N protein.

Belongs to the alphacoronaviruses M protein family. As to quaternary structure, homomultimer. Interacts with envelope E protein in the budding compartment of the host cell, which is located between endoplasmic reticulum and the Golgi complex. Forms a complex with HE and S proteins. Interacts with nucleocapsid N protein. This interaction probably participates in RNA packaging into the virus.

It localises to the virion membrane. Its subcellular location is the host Golgi apparatus membrane. Component of the viral envelope that plays a central role in virus morphogenesis and assembly via its interactions with other viral proteins. The chain is Membrane protein from Sus scrofa (Pig).